We begin with the raw amino-acid sequence, 102 residues long: METNDSDDRIEAIVSEESDELEVNSGTTEETNVLELLTIISGLVVTLVLVVLVVLVVVGVVVLVVLLVVVVLLCDVVVAVVDFEPDEPILIRRYPFLWIPFL.

2 consecutive transmembrane segments (helical) span residues 33-55 (VLEL…LVVL) and 57-79 (VVGV…VVVA).

The protein resides in the membrane. This is an uncharacterized protein from Saccharomyces cerevisiae (strain ATCC 204508 / S288c) (Baker's yeast).